Consider the following 368-residue polypeptide: Cobalt-precorrin-5B C(1)-methyltransferase (368 aa).

Belongs to the CbiD family.

It catalyses the reaction Co-precorrin-5B + S-adenosyl-L-methionine = Co-precorrin-6A + S-adenosyl-L-homocysteine. Its pathway is cofactor biosynthesis; adenosylcobalamin biosynthesis; cob(II)yrinate a,c-diamide from sirohydrochlorin (anaerobic route): step 6/10. Its function is as follows. Catalyzes the methylation of C-1 in cobalt-precorrin-5B to form cobalt-precorrin-6A. This Brucella ovis (strain ATCC 25840 / 63/290 / NCTC 10512) protein is Cobalt-precorrin-5B C(1)-methyltransferase.